Reading from the N-terminus, the 386-residue chain is ATP phosphoribosyltransferase regulatory subunit (386 aa).

It belongs to the class-II aminoacyl-tRNA synthetase family. HisZ subfamily. As to quaternary structure, heteromultimer composed of HisG and HisZ subunits.

The protein resides in the cytoplasm. It participates in amino-acid biosynthesis; L-histidine biosynthesis; L-histidine from 5-phospho-alpha-D-ribose 1-diphosphate: step 1/9. Its function is as follows. Required for the first step of histidine biosynthesis. May allow the feedback regulation of ATP phosphoribosyltransferase activity by histidine. The sequence is that of ATP phosphoribosyltransferase regulatory subunit from Ralstonia nicotianae (strain ATCC BAA-1114 / GMI1000) (Ralstonia solanacearum).